The sequence spans 231 residues: Aminodeoxyfutalosine nucleosidase (231 aa).

The active-site Proton acceptor is the Glu-14. Substrate is bound by residues Gly-81, Val-155, and 175–176; that span reads ME. The Proton donor role is filled by Asp-199.

It belongs to the PNP/UDP phosphorylase family. Homodimer.

It catalyses the reaction 6-amino-6-deoxyfutalosine + H2O = dehypoxanthine futalosine + adenine. It carries out the reaction S-adenosyl-L-homocysteine + H2O = S-(5-deoxy-D-ribos-5-yl)-L-homocysteine + adenine. The enzyme catalyses S-methyl-5'-thioadenosine + H2O = 5-(methylsulfanyl)-D-ribose + adenine. The catalysed reaction is 5'-deoxyadenosine + H2O = 5-deoxy-D-ribose + adenine. The protein operates within quinol/quinone metabolism; menaquinone biosynthesis. It participates in amino-acid biosynthesis; L-methionine biosynthesis via salvage pathway; S-methyl-5-thio-alpha-D-ribose 1-phosphate from S-methyl-5'-thioadenosine (hydrolase route): step 1/2. Catalyzes the direct conversion of aminodeoxyfutalosine (AFL) into dehypoxanthine futalosine (DHFL) and adenine via the hydrolysis of the N-glycosidic bond; this reaction seems to represent an essential step in the menaquinone biosynthesis pathway in Helicobacter species. Can also probably catalyzes the hydrolysis of 5'-methylthioadenosine (MTA) and S-adenosylhomocysteine (SAH) to adenine and the corresponding thioribose, 5'-methylthioribose and S-ribosylhomocysteine, respectively. These other activities highlight the tremendous versatility of the enzyme, which also plays key roles in S-adenosylmethionine recycling and in the biosynthesis of the quorum-sensing molecule autoinducer-2. Does not act on futalosine (FL) as substrate. This is Aminodeoxyfutalosine nucleosidase (mtnN) from Helicobacter pylori (strain ATCC 700392 / 26695) (Campylobacter pylori).